We begin with the raw amino-acid sequence, 493 residues long: Adenylyltransferase and sulfurtransferase uba4 (493 aa).

ATP contacts are provided by residues G99, D120, 127–131, K144, and 188–189; these read SNLHR and DN. 2 residues coordinate Zn(2+): C237 and C240. The Glycyl thioester intermediate; for adenylyltransferase activity role is filled by C254. Zn(2+) is bound by residues C316 and C319. The region spanning 376–491 is the Rhodanese domain; that stretch reads INKEPTIIDV…WREQIDPDWP (116 aa). Catalysis depends on C446, which acts as the Cysteine persulfide intermediate; for sulfurtransferase activity.

The protein in the N-terminal section; belongs to the HesA/MoeB/ThiF family. UBA4 subfamily. Requires Zn(2+) as cofactor.

It localises to the cytoplasm. Its subcellular location is the cytosol. The catalysed reaction is [molybdopterin-synthase sulfur-carrier protein]-C-terminal Gly-Gly + ATP + H(+) = [molybdopterin-synthase sulfur-carrier protein]-C-terminal Gly-Gly-AMP + diphosphate. The enzyme catalyses [molybdopterin-synthase sulfur-carrier protein]-C-terminal Gly-Gly-AMP + S-sulfanyl-L-cysteinyl-[cysteine desulfurase] + AH2 = [molybdopterin-synthase sulfur-carrier protein]-C-terminal-Gly-aminoethanethioate + L-cysteinyl-[cysteine desulfurase] + A + AMP + 2 H(+). It participates in tRNA modification; 5-methoxycarbonylmethyl-2-thiouridine-tRNA biosynthesis. It functions in the pathway cofactor biosynthesis; molybdopterin biosynthesis. In terms of biological role, plays a central role in 2-thiolation of mcm(5)S(2)U at tRNA wobble positions of cytosolic tRNA(Lys), tRNA(Glu) and tRNA(Gln). Also essential during biosynthesis of the molybdenum cofactor. Acts by mediating the C-terminal thiocarboxylation of sulfur carriers urm1 and mocs2a. Its N-terminus first activates urm1 and mocs2a as acyl-adenylates (-COAMP), then the persulfide sulfur on the catalytic cysteine is transferred to urm1 and mocs2a to form thiocarboxylation (-COSH) of their C-terminus. The reaction probably involves hydrogen sulfide that is generated from the persulfide intermediate and that acts as a nucleophile towards urm1 and mocs2a. Subsequently, a transient disulfide bond is formed. Does not use thiosulfate as sulfur donor; nfs1 probably acting as a sulfur donor for thiocarboxylation reactions. The sequence is that of Adenylyltransferase and sulfurtransferase uba4 from Aspergillus fumigatus (strain ATCC MYA-4609 / CBS 101355 / FGSC A1100 / Af293) (Neosartorya fumigata).